The following is a 427-amino-acid chain: Enolase (427 aa).

A (2R)-2-phosphoglycerate-binding site is contributed by glutamine 163. Glutamate 205 (proton donor) is an active-site residue. Mg(2+)-binding residues include aspartate 242, glutamate 285, and aspartate 312. (2R)-2-phosphoglycerate contacts are provided by lysine 337, arginine 366, serine 367, and lysine 388. Lysine 337 serves as the catalytic Proton acceptor.

It belongs to the enolase family. Mg(2+) serves as cofactor.

The protein localises to the cytoplasm. It localises to the secreted. It is found in the cell surface. It carries out the reaction (2R)-2-phosphoglycerate = phosphoenolpyruvate + H2O. The protein operates within carbohydrate degradation; glycolysis; pyruvate from D-glyceraldehyde 3-phosphate: step 4/5. Functionally, catalyzes the reversible conversion of 2-phosphoglycerate (2-PG) into phosphoenolpyruvate (PEP). It is essential for the degradation of carbohydrates via glycolysis. The chain is Enolase from Burkholderia thailandensis (strain ATCC 700388 / DSM 13276 / CCUG 48851 / CIP 106301 / E264).